Reading from the N-terminus, the 397-residue chain is ATP-dependent RNA helicase eIF4A (397 aa).

Residues Y23–Q51 carry the Q motif motif. Positions I54–I224 constitute a Helicase ATP-binding domain. A67–T74 contacts ATP. The short motif at D172–D175 is the DEAD box element. The 162-residue stretch at G235–F396 folds into the Helicase C-terminal domain.

The protein belongs to the DEAD box helicase family. eIF4A subfamily. As to quaternary structure, component of the eIF4F complex, which composition varies with external and internal environmental conditions. It is composed of at least eIF4A, eIF4E and eIF4G.

Its subcellular location is the cytoplasm. The enzyme catalyses ATP + H2O = ADP + phosphate + H(+). ATP-dependent RNA helicase which is a subunit of the eIF4F complex involved in cap recognition and is required for mRNA binding to ribosome. In the current model of translation initiation, eIF4A unwinds RNA secondary structures in the 5'-UTR of mRNAs which is necessary to allow efficient binding of the small ribosomal subunit, and subsequent scanning for the initiator codon. This chain is ATP-dependent RNA helicase eIF4A (TIF1), found in Scheffersomyces stipitis (strain ATCC 58785 / CBS 6054 / NBRC 10063 / NRRL Y-11545) (Yeast).